The following is an 822-amino-acid chain: MNGHMSNHSSGYGIYPSQMNGYGSSPPYSQMDREHCSRTSAKALYEQRKNYARDSVSSVSDVSQYRVEHLTTFVLDRKDAMITVDDGIRKLKLLDAKGKVWTQDMILQVDDRAVSLIDLESKNELENFPLNTIQHCQAVAHTCSYDSILALVCKEPTQNKPDLHLFQCDEVKANLISEDIESAISDSKGGKQKRRPEALRMIAKADPGIPPPPRAPAPVPPGTVTQVDVRSRVAAWSAWAADQGDFEKPRQYHEQEETPEMMAARIDRDVQILNHILDDIEFFITKLQKAAEAFSELSKRKKSKKSKRKGPGEGVLTLRAKPPPPDEFVDCFQKFKHGFNLLAKLKSHIQNPSASDLVHFLFTPLNMVVQATGGPELASSVLSPLLTKDTVDFLNYTVKAEERQLWMSLGETWMKVRAEWPKEQFIPPYVPRFRNGWEPPMLNFMGAPTEQDMYQLAESVANAAEQQRKQDSKRQSTEHSSMSDYPPADGYTFSNSMYHRGPHVDQGEAALALKSTPNRHVDRNYDPVKTQPKKYAKSKYDFVARNSSELSVMKDDVLEILDDRKQWWKVRNASGDSGFVPNNILDIMRTPESGVGRTDPPYTHTIQKQRTEYGPRSADTPSAPSPPPTPAPVPVPLPPSAPAPVPVPKVPANVTRQNSSSSESGGSIARDSQRYKQLPVDRRKSQMEEVQDELFQRLTIGRSAAQRKFHVPRQNVPVINITYDSSPEEVKTWLQSKGFNPVTVSSLGVLNGAQLFSLNKDELRSVCPEGARVFSQITVQKAALEDSSGSSELQEIMRRRQEKISAAASDSGVESFDEGSSH.

Ser58 bears the Phosphoserine mark. In terms of domain architecture, PTB spans 64–194 (QYRVEHLTTF…SDSKGGKQKR (131 aa)). Disordered stretches follow at residues 204–224 (KADP…PGTV), 295–320 (SELS…TLRA), and 460–487 (VANA…DYPP). A compositionally biased stretch (pro residues) spans 208-221 (GIPPPPRAPAPVPP). Thr223 carries the phosphothreonine modification. The span at 299–309 (KRKKSKKSKRK) shows a compositional bias: basic residues. Position 317 is a phosphothreonine (Thr317). Positions 466–477 (QQRKQDSKRQST) are enriched in basic and acidic residues. Position 476 is a phosphoserine (Ser476). One can recognise an SH3 domain in the interval 531–590 (QPKKYAKSKYDFVARNSSELSVMKDDVLEILDDRKQWWKVRNASGDSGFVPNNILDIMRT). Residues 608-685 (KQRTEYGPRS…KQLPVDRRKS (78 aa)) form a disordered region. The segment covering 623–649 (APSPPPTPAPVPVPLPPSAPAPVPVPK) has biased composition (pro residues). The residue at position 625 (Ser625) is a Phosphoserine; by MAPK. Thr629 carries the phosphothreonine; by MAPK modification. Positions 649–822 (KVPANVTRQN…VESFDEGSSH (174 aa)) are effector region. A phosphoserine mark is found at Ser659, Ser662, and Ser685. The segment covering 671 to 685 (DSQRYKQLPVDRRKS) has biased composition (basic and acidic residues). Residues 680 to 698 (VDRRKSQMEEVQDELFQRL) form an amphipathic helix region. Helix bundle stretches follow at residues 718 to 738 (VINI…QSKG), 752 to 757 (GAQLFS), 762 to 767 (ELRSVC), and 766 to 785 (VCPE…AALE). Positions 787–822 (SSGSSELQEIMRRRQEKISAAASDSGVESFDEGSSH) are disordered. 2 positions are modified to phosphoserine: Ser811 and Ser815.

Belongs to the EPS8 family. As to quaternary structure, homodimer. Part of a complex consisting of ABI1, EPS8 and SOS1. Interacts with BAIAP2. Interacts with SHB and LANCL1. Interacts with EGFR; mediates EPS8 phosphorylation. Interacts with MYO15A and WHRN. Ubiquitinated by the SCF(FBXW5) E3 ubiquitin-protein ligase complex during G2 phase, leading to its transient degradation and subsequent cell shape changes required to allow mitotic progression. Reappears at the midzone of dividing cells. Post-translationally, phosphorylation at Ser-625 and Thr-629 by MAPK following BDNF treatment promotes removal from actin and filopodia formation. Phosphorylated by several receptor tyrosine kinases. In terms of tissue distribution, expressed in neuronal cell body and neurites, and prominently enriched in the axonal growth cone.

The protein resides in the synapse. It is found in the synaptosome. It localises to the cytoplasm. The protein localises to the cell cortex. Its subcellular location is the cell projection. The protein resides in the ruffle membrane. It is found in the stereocilium. It localises to the growth cone. Signaling adapter that controls various cellular protrusions by regulating actin cytoskeleton dynamics and architecture. Depending on its association with other signal transducers, can regulate different processes. Together with SOS1 and ABI1, forms a trimeric complex that participates in transduction of signals from Ras to Rac by activating the Rac-specific guanine nucleotide exchange factor (GEF) activity. Acts as a direct regulator of actin dynamics by binding actin filaments and has both barbed-end actin filament capping and actin bundling activities depending on the context. Displays barbed-end actin capping activity when associated with ABI1, thereby regulating actin-based motility process: capping activity is auto-inhibited and inhibition is relieved upon ABI1 interaction. Also shows actin bundling activity when associated with BAIAP2, enhancing BAIAP2-dependent membrane extensions and promoting filopodial protrusions. Involved in the regulation of processes such as axonal filopodia growth, stereocilia length, dendritic cell migration and cancer cell migration and invasion. Acts as a regulator of axonal filopodia formation in neurons: in the absence of neurotrophic factors, negatively regulates axonal filopodia formation via actin-capping activity. In contrast, it is phosphorylated in the presence of BDNF leading to inhibition of its actin-capping activity and stimulation of filopodia formation. Component of a complex with WHRN and MYO15A that localizes at stereocilia tips and is required for elongation of the stereocilia actin core. Indirectly involved in cell cycle progression; its degradation following ubiquitination being required during G2 phase to promote cell shape changes. The sequence is that of Epidermal growth factor receptor kinase substrate 8 (Eps8) from Rattus norvegicus (Rat).